A 496-amino-acid chain; its full sequence is RNA-binding motif protein, Y chromosome, family 1 member D (496 aa).

The region spanning 8–85 is the RRM domain; that stretch reads GKLFIGGLNR…KAIKVEQAKK (78 aa). Disordered stretches follow at residues 67–349 and 452–496; these read DMNG…HRDY and KDQR…SSRY. Low complexity-rich tracts occupy residues 97–114 and 149–159; these read PASS…SARG and PVKRGPSSRSG. The segment covering 175–184 has biased composition (polar residues); it reads NSWMGSQGPM. Basic and acidic residues-rich tracts occupy residues 204–214, 242–253, 276–289, 313–326, 335–349, and 484–496; these read RNDRMSTRHDG, DNGHSNRDEHSS, AYRD…DESY, GYRD…HESY, SSRE…HRDY, and GESR…SSRY.

As to quaternary structure, interacts with splicing factor proteins SFRS3/SRP20, TRA2B/SFRS10, KHDRBS1/SAM68 and KHDRBS3. In terms of tissue distribution, testis-specific.

The protein localises to the nucleus. In terms of biological role, RNA-binding protein which may be involved in spermatogenesis. Required for sperm development, possibly by participating in pre-mRNA splicing in the testis. This is RNA-binding motif protein, Y chromosome, family 1 member D (RBMY1D) from Homo sapiens (Human).